Consider the following 304-residue polypeptide: Sulfate adenylyltransferase subunit 2 (304 aa).

Belongs to the PAPS reductase family. CysD subfamily. Heterodimer composed of CysD, the smaller subunit, and CysN.

The catalysed reaction is sulfate + ATP + H(+) = adenosine 5'-phosphosulfate + diphosphate. It functions in the pathway sulfur metabolism; hydrogen sulfide biosynthesis; sulfite from sulfate: step 1/3. With CysN forms the ATP sulfurylase (ATPS) that catalyzes the adenylation of sulfate producing adenosine 5'-phosphosulfate (APS) and diphosphate, the first enzymatic step in sulfur assimilation pathway. APS synthesis involves the formation of a high-energy phosphoric-sulfuric acid anhydride bond driven by GTP hydrolysis by CysN coupled to ATP hydrolysis by CysD. The sequence is that of Sulfate adenylyltransferase subunit 2 from Acinetobacter baylyi (strain ATCC 33305 / BD413 / ADP1).